The sequence spans 525 residues: GMP synthase [glutamine-hydrolyzing] (525 aa).

A Glutamine amidotransferase type-1 domain is found at lysine 8 to asparagine 207. Catalysis depends on cysteine 85, which acts as the Nucleophile. Residues histidine 181 and glutamate 183 contribute to the active site. The GMPS ATP-PPase domain maps to tryptophan 208–arginine 400. Serine 235–serine 241 provides a ligand contact to ATP.

As to quaternary structure, homodimer.

It carries out the reaction XMP + L-glutamine + ATP + H2O = GMP + L-glutamate + AMP + diphosphate + 2 H(+). It functions in the pathway purine metabolism; GMP biosynthesis; GMP from XMP (L-Gln route): step 1/1. In terms of biological role, catalyzes the synthesis of GMP from XMP. In Shewanella pealeana (strain ATCC 700345 / ANG-SQ1), this protein is GMP synthase [glutamine-hydrolyzing].